Consider the following 324-residue polypeptide: Reaction center protein M chain (324 aa).

Over 2 to 51 (ADYQTIYTQIQARGPHITVSGEWGDNDRVGKPFYSYWLGKIGDAQIGPIY) the chain is Cytoplasmic. The chain crosses the membrane as a helical span at residues 52-76 (LGASGIAAFAFGSTAILIILFNMAA). Residues 77–110 (EVHFDPLQFFRQFFWLGLYPPKAQYGMGIPPLHD) are Periplasmic-facing. The chain crosses the membrane as a helical span at residues 111-137 (GGWWLMAGLFMTLSLGSWWIRVYSRAR). Residues 138–142 (ALGLG) are Cytoplasmic-facing. A helical transmembrane segment spans residues 143-166 (THIAWNFAAAIFFVLCIGCIHPTL). Topologically, residues 167-197 (VGSWSEGVPFGIWPHIDWLTAFSIRYGNFYY) are periplasmic. His-181 and His-201 together coordinate (7R,8Z)-bacteriochlorophyll b. Residues 198-223 (CPWHGFSIGFAYGCGLLFAAHGATIL) form a helical membrane-spanning segment. Residues His-218 and Glu-233 each contribute to the Fe cation site. The Cytoplasmic portion of the chain corresponds to 224 to 259 (AVARFGGDREIEQITDRGTAVERAALFWRWTIGFNA). Trp-251 lines the a ubiquinone pocket. A helical membrane pass occupies residues 260–284 (TIESVHRWGWFFSLMVMVSASVGIL). His-265 provides a ligand contact to Fe cation. The Periplasmic segment spans residues 285-324 (LTGTFVDNWYLWCVKHGAAPDYPAYLPATPDPASLPGAPK).

The protein belongs to the reaction center PufL/M/PsbA/D family. Reaction center is composed of four bacteriochlorophylls, two bacteriopheophytins, two ubiquinones, one iron, and three highly hydrophobic polypeptide chains (designated L, M, and H).

The protein localises to the cellular chromatophore membrane. The reaction center is a membrane-bound complex that mediates the initial photochemical event in the electron transfer process of photosynthesis. This is Reaction center protein M chain (pufM) from Blastochloris viridis (Rhodopseudomonas viridis).